Consider the following 284-residue polypeptide: Peflin (284 aa).

The interval Met-1–Ala-111 is disordered. Positions Gln-8 to Tyr-26 are enriched in low complexity. 9 repeat units span residues Pro-21–Pro-29, Asn-31–Gly-39, Pro-41–Pro-49, Ala-50–Pro-58, Ala-59–Pro-67, Thr-76–Ala-84, Ala-85–Gln-92, Pro-93–Ala-100, and Gln-101–Gly-109. The tract at residues Pro-21–Gly-109 is 9 X 9 AA approximate tandem repeat of [AP]-P-G-G-P-Y-G-G-P-P. Positions Gly-34 to Ala-50 are enriched in gly residues. Low complexity predominate over residues Gly-65–Gly-75. Over residues Thr-76–Tyr-90 the composition is skewed to gly residues. 5 consecutive EF-hand domains span residues Asn-114 to Ser-149, Thr-155 to Ile-183, Lys-181 to Asn-216, Leu-217 to Leu-253, and Thr-254 to Met-283. The Ca(2+) site is built by Asp-127, Asp-129, Ser-131, and Tyr-133. Residue Lys-137 forms a Glycyl lysine isopeptide (Lys-Gly) (interchain with G-Cter in ubiquitin) linkage. A Ca(2+)-binding site is contributed by Glu-138. Residues Asp-194, Asp-196, Ser-198, Ser-200, and Glu-205 each contribute to the Ca(2+) site. The required for interaction with PDCD6 stretch occupies residues Thr-204–Leu-284.

In terms of assembly, heterodimer; heterodimerizes (via the EF-hand 5) with PDCD6. Dissociates from PDCD6 in presence of calcium. Post-translationally, ubiquitinated by the BCR(KLHL12) E3 ubiquitin ligase complex.

Its subcellular location is the cytoplasm. It is found in the endoplasmic reticulum. The protein resides in the membrane. The protein localises to the cytoplasmic vesicle. It localises to the COPII-coated vesicle membrane. Its function is as follows. Calcium-binding protein that acts as an adapter that bridges unrelated proteins or stabilizes weak protein-protein complexes in response to calcium. Together with PDCD6, acts as a calcium-dependent adapter for the BCR(KLHL12) complex, a complex involved in endoplasmic reticulum (ER)-Golgi transport by regulating the size of COPII coats. In response to cytosolic calcium increase, the heterodimer formed with PDCD6 interacts with, and bridges together the BCR(KLHL12) complex and SEC31 (SEC31A or SEC31B), promoting monoubiquitination of SEC31 and subsequent collagen export, which is required for neural crest specification. Its role in the heterodimer formed with PDCD6 is however unclear: some evidence shows that PEF1 and PDCD6 work together and promote association between PDCD6 and SEC31 in presence of calcium. Other reports show that PEF1 dissociates from PDCD6 in presence of calcium, and may act as a negative regulator of PDCD6. Also acts as a negative regulator of ER-Golgi transport; possibly by inhibiting interaction between PDCD6 and SEC31. In Homo sapiens (Human), this protein is Peflin.